A 259-amino-acid chain; its full sequence is Major cell-binding factor (259 aa).

The N-terminal stretch at 1–26 (MVFRKSLLKLAVFALGACVAFSNANA) is a signal peptide.

It belongs to the bacterial solute-binding protein 3 family.

Its subcellular location is the cell surface. In terms of biological role, common antigen and a major cell adherence molecule. Most probably involved, with PEB1C, in a binding-protein-dependent transport system for an amino acid. May be involved in binding to intestinal cells. This chain is Major cell-binding factor (peb1A), found in Campylobacter jejuni subsp. jejuni serotype O:2 (strain ATCC 700819 / NCTC 11168).